Here is a 189-residue protein sequence, read N- to C-terminus: ATP-dependent protease subunit HslV (189 aa).

T12 is a catalytic residue. Residues S172, C175, and T178 each coordinate Na(+).

It belongs to the peptidase T1B family. HslV subfamily. In terms of assembly, a double ring-shaped homohexamer of HslV is capped on each side by a ring-shaped HslU homohexamer. The assembly of the HslU/HslV complex is dependent on binding of ATP.

The protein localises to the cytoplasm. The catalysed reaction is ATP-dependent cleavage of peptide bonds with broad specificity.. Its activity is regulated as follows. Allosterically activated by HslU binding. In terms of biological role, protease subunit of a proteasome-like degradation complex believed to be a general protein degrading machinery. The protein is ATP-dependent protease subunit HslV of Ehrlichia canis (strain Jake).